The following is a 112-amino-acid chain: Evasin P1095 (112 aa).

The first 23 residues, 1–23, serve as a signal peptide directing secretion; that stretch reads MELNAFTILQIAVFIAVGYHANT. 3 cysteine pairs are disulfide-bonded: Cys48–Cys66, Cys52–Cys68, and Cys62–Cys79. Asn51 carries an N-linked (GlcNAc...) asparagine glycan. The interval 89–112 is disordered; that stretch reads GDPNDDPKINEATPQTQIFEKKRK.

The protein localises to the secreted. Salivary chemokine-binding protein which binds to host chemokine CXCL8. The protein is Evasin P1095 of Ixodes ricinus (Common tick).